Reading from the N-terminus, the 143-residue chain is Competence protein ComGD (143 aa).

The propeptide occupies 1–10; that stretch reads MNIKLNEEKG. Phenylalanine 11 is subject to N-methylphenylalanine. The chain crosses the membrane as a helical span at residues 11–31; that stretch reads FTLLESLLVLSLASILLVAVF.

As to quaternary structure, the transformation pili are flexible filaments, consisting mainly of the major pilin ComGC and smaller amounts of the minor pilins, including at least ComGD, ComGF and ComGG. Interacts with ComGF. Interacts with ComGG. Processing of ComGD in competent cells requires ComC.

Its subcellular location is the cell membrane. It localises to the cell surface. Functionally, required for formation of the type IV-like pilus (T4P) that plays a role in transformation. Transformation pili are dynamically extended and retracted, perhaps thereby promoting DNA uptake and transformation. Required for transformation and DNA binding. In Bacillus subtilis (strain 168), this protein is Competence protein ComGD (comGD).